Reading from the N-terminus, the 306-residue chain is D-alanine--D-alanine ligase (306 aa).

The ATP-grasp domain occupies 107-303; that stretch reads KHLFKSAGLS…FEQLVVRILE (197 aa). 134–189 is an ATP binding site; that stretch reads IMQQFKKVMVKPSHEGSSIGMAQASTPQELEDALSNAFKFDSQVLVEQWISGREFT. Positions 257, 270, and 272 each coordinate Mg(2+).

Belongs to the D-alanine--D-alanine ligase family. The cofactor is Mg(2+). It depends on Mn(2+) as a cofactor.

The protein resides in the cytoplasm. It catalyses the reaction 2 D-alanine + ATP = D-alanyl-D-alanine + ADP + phosphate + H(+). It participates in cell wall biogenesis; peptidoglycan biosynthesis. In terms of biological role, cell wall formation. The sequence is that of D-alanine--D-alanine ligase from Pseudoalteromonas translucida (strain TAC 125).